Here is a 178-residue protein sequence, read N- to C-terminus: ATP synthase subunit delta (178 aa).

The protein belongs to the ATPase delta chain family. As to quaternary structure, F-type ATPases have 2 components, F(1) - the catalytic core - and F(0) - the membrane proton channel. F(1) has five subunits: alpha(3), beta(3), gamma(1), delta(1), epsilon(1). F(0) has three main subunits: a(1), b(2) and c(10-14). The alpha and beta chains form an alternating ring which encloses part of the gamma chain. F(1) is attached to F(0) by a central stalk formed by the gamma and epsilon chains, while a peripheral stalk is formed by the delta and b chains.

The protein resides in the cell membrane. Functionally, f(1)F(0) ATP synthase produces ATP from ADP in the presence of a proton or sodium gradient. F-type ATPases consist of two structural domains, F(1) containing the extramembraneous catalytic core and F(0) containing the membrane proton channel, linked together by a central stalk and a peripheral stalk. During catalysis, ATP synthesis in the catalytic domain of F(1) is coupled via a rotary mechanism of the central stalk subunits to proton translocation. This protein is part of the stalk that links CF(0) to CF(1). It either transmits conformational changes from CF(0) to CF(1) or is implicated in proton conduction. The polypeptide is ATP synthase subunit delta (Geobacillus sp. (strain WCH70)).